The primary structure comprises 334 residues: tRNA N6-adenosine threonylcarbamoyltransferase (334 aa).

Fe cation-binding residues include H107 and H111. Residues 129-133 (LVSGG), D162, G175, and N269 contribute to the substrate site. D297 serves as a coordination point for Fe cation.

It belongs to the KAE1 / TsaD family. The cofactor is Fe(2+).

It is found in the cytoplasm. The catalysed reaction is L-threonylcarbamoyladenylate + adenosine(37) in tRNA = N(6)-L-threonylcarbamoyladenosine(37) in tRNA + AMP + H(+). Functionally, required for the formation of a threonylcarbamoyl group on adenosine at position 37 (t(6)A37) in tRNAs that read codons beginning with adenine. Is involved in the transfer of the threonylcarbamoyl moiety of threonylcarbamoyl-AMP (TC-AMP) to the N6 group of A37, together with TsaE and TsaB. TsaD likely plays a direct catalytic role in this reaction. This is tRNA N6-adenosine threonylcarbamoyltransferase from Campylobacter concisus (strain 13826).